The primary structure comprises 183 residues: Gamma-crystallin N (183 aa).

Beta/gamma crystallin 'Greek key' domains lie at 6–46 (GKII…RVET), 47–89 (GAWI…KPVR), 95–136 (YRLE…KVYG), and 138–180 (GAWV…RRVV).

Belongs to the beta/gamma-crystallin family. Monomer.

Its function is as follows. Crystallins are the dominant structural components of the vertebrate eye lens. This chain is Gamma-crystallin N (crygn), found in Xenopus tropicalis (Western clawed frog).